Here is a 2283-residue protein sequence, read N- to C-terminus: DNA polymerase epsilon catalytic subunit A (2283 aa).

The disordered stretch occupies residues 1 to 32; the sequence is MVLRNSGRRHPEPGADGEGSRDDGPSSSVSAL. The segment covering 9 to 24 has biased composition (basic and acidic residues); the sequence is RHPEPGADGEGSRDDG. Residues serine 1184, serine 1296, and serine 1316 each carry the phosphoserine modification. Disordered stretches follow at residues 1935-1968 and 2014-2041; these read GQVKEQDSQAREETDEEEEDKEKDEEEEGMGESE and HSAPGSTPVKRKGASQFSQESEGATGSL. Residues 1936 to 1946 show a composition bias toward basic and acidic residues; the sequence is QVKEQDSQARE. Residues 1947 to 1968 are compositionally biased toward acidic residues; the sequence is ETDEEEEDKEKDEEEEGMGESE. Positions 2028 to 2037 are enriched in polar residues; sequence SQFSQESEGA. Zn(2+) is bound by residues cysteine 2155, cysteine 2158, cysteine 2184, and cysteine 2187. The CysA-type zinc-finger motif lies at 2155-2187; it reads CHSCNFCRDLDLCKDSSFSQDGAILPQWLCSNC. Residues cysteine 2218, cysteine 2221, cysteine 2233, and cysteine 2235 each contribute to the [4Fe-4S] cluster site. Positions 2218 to 2235 match the CysB motif motif; sequence CLKCRGMKETHMPVYCSC.

This sequence belongs to the DNA polymerase type-B family. As to quaternary structure, component of the DNA polymerase epsilon complex consisting of four subunits: the catalytic subunit POLE and the accessory subunits POLE2, POLE3 and POLE4. Interacts with RAD17 and TOPBP1. The cofactor is [4Fe-4S] cluster.

The protein resides in the nucleus. The enzyme catalyses DNA(n) + a 2'-deoxyribonucleoside 5'-triphosphate = DNA(n+1) + diphosphate. Functionally, catalytic component of the DNA polymerase epsilon complex. Participates in chromosomal DNA replication. Required during synthesis of the leading DNA strands at the replication fork and binds at/or near replication origins and moves along DNA with the replication fork. Has 3'-5' proofreading exonuclease activity that corrects errors arising during DNA replication. It is also involved in DNA synthesis during DNA repair. This is DNA polymerase epsilon catalytic subunit A (Pole) from Mus musculus (Mouse).